The chain runs to 309 residues: MESIRAGVSRERLTHLQQLEAESIHIIREVAAEFENPVMMYSIGKDSSVMLHLARKAFYPGKIPFPLLHVDTDWKFKEMITFRDETAKKYGLDLIVHKNPDGLAMGINPFVHGSGKHTDIMKTEGLKQALNQHGFDAAFGGARRDEEKSRAKERVYSFRDKSHRWDPKNQRPELWRVYNSQVNKGESIRVFPLSNWTELDIWQYIYLENIDIVPLYFAAVRPVVERNGIKIMVDDERMPIGPEDEVKQELVRFRTLGCYPLTGAIESDATTLPEIIEEMLLTTSSERQGRLIDHDQAGSMEQKKRQGYF.

The protein belongs to the PAPS reductase family. CysD subfamily. In terms of assembly, heterodimer composed of CysD, the smaller subunit, and CysN.

It carries out the reaction sulfate + ATP + H(+) = adenosine 5'-phosphosulfate + diphosphate. It functions in the pathway sulfur metabolism; hydrogen sulfide biosynthesis; sulfite from sulfate: step 1/3. With CysN forms the ATP sulfurylase (ATPS) that catalyzes the adenylation of sulfate producing adenosine 5'-phosphosulfate (APS) and diphosphate, the first enzymatic step in sulfur assimilation pathway. APS synthesis involves the formation of a high-energy phosphoric-sulfuric acid anhydride bond driven by GTP hydrolysis by CysN coupled to ATP hydrolysis by CysD. The sequence is that of Sulfate adenylyltransferase subunit 2 from Aeromonas salmonicida (strain A449).